Consider the following 102-residue polypeptide: NADH-quinone oxidoreductase subunit K (102 aa).

The next 3 membrane-spanning stretches (helical) occupy residues 5–25 (LGHF…GIFL), 31–51 (IVLL…FVAF), and 62–82 (IFVF…LALL).

Belongs to the complex I subunit 4L family. As to quaternary structure, NDH-1 is composed of 14 different subunits. Subunits NuoA, H, J, K, L, M, N constitute the membrane sector of the complex.

Its subcellular location is the cell inner membrane. It catalyses the reaction a quinone + NADH + 5 H(+)(in) = a quinol + NAD(+) + 4 H(+)(out). In terms of biological role, NDH-1 shuttles electrons from NADH, via FMN and iron-sulfur (Fe-S) centers, to quinones in the respiratory chain. The immediate electron acceptor for the enzyme in this species is believed to be ubiquinone. Couples the redox reaction to proton translocation (for every two electrons transferred, four hydrogen ions are translocated across the cytoplasmic membrane), and thus conserves the redox energy in a proton gradient. In Variovorax paradoxus (strain S110), this protein is NADH-quinone oxidoreductase subunit K.